The following is a 365-amino-acid chain: UDP-N-acetylglucosamine--N-acetylmuramyl-(pentapeptide) pyrophosphoryl-undecaprenol N-acetylglucosamine transferase (365 aa).

Residues Thr20–Gly22, Asn132, Arg168, Ser196, Ile253, and Gln298 each bind UDP-N-acetyl-alpha-D-glucosamine.

Belongs to the glycosyltransferase 28 family. MurG subfamily.

It localises to the cell inner membrane. It catalyses the reaction di-trans,octa-cis-undecaprenyl diphospho-N-acetyl-alpha-D-muramoyl-L-alanyl-D-glutamyl-meso-2,6-diaminopimeloyl-D-alanyl-D-alanine + UDP-N-acetyl-alpha-D-glucosamine = di-trans,octa-cis-undecaprenyl diphospho-[N-acetyl-alpha-D-glucosaminyl-(1-&gt;4)]-N-acetyl-alpha-D-muramoyl-L-alanyl-D-glutamyl-meso-2,6-diaminopimeloyl-D-alanyl-D-alanine + UDP + H(+). Its pathway is cell wall biogenesis; peptidoglycan biosynthesis. Functionally, cell wall formation. Catalyzes the transfer of a GlcNAc subunit on undecaprenyl-pyrophosphoryl-MurNAc-pentapeptide (lipid intermediate I) to form undecaprenyl-pyrophosphoryl-MurNAc-(pentapeptide)GlcNAc (lipid intermediate II). In Ralstonia nicotianae (strain ATCC BAA-1114 / GMI1000) (Ralstonia solanacearum), this protein is UDP-N-acetylglucosamine--N-acetylmuramyl-(pentapeptide) pyrophosphoryl-undecaprenol N-acetylglucosamine transferase.